Reading from the N-terminus, the 436-residue chain is Histidinol dehydrogenase (436 aa).

NAD(+) is bound by residues Tyr-135, Gln-197, and Asn-220. 3 residues coordinate substrate: Thr-243, Gln-265, and His-268. Positions 265 and 268 each coordinate Zn(2+). Residues Glu-334 and His-335 each act as proton acceptor in the active site. The substrate site is built by His-335, Asp-368, Glu-422, and His-427. A Zn(2+)-binding site is contributed by Asp-368. A Zn(2+)-binding site is contributed by His-427.

It belongs to the histidinol dehydrogenase family. Zn(2+) is required as a cofactor.

The enzyme catalyses L-histidinol + 2 NAD(+) + H2O = L-histidine + 2 NADH + 3 H(+). Its pathway is amino-acid biosynthesis; L-histidine biosynthesis; L-histidine from 5-phospho-alpha-D-ribose 1-diphosphate: step 9/9. Functionally, catalyzes the sequential NAD-dependent oxidations of L-histidinol to L-histidinaldehyde and then to L-histidine. The polypeptide is Histidinol dehydrogenase (Deinococcus radiodurans (strain ATCC 13939 / DSM 20539 / JCM 16871 / CCUG 27074 / LMG 4051 / NBRC 15346 / NCIMB 9279 / VKM B-1422 / R1)).